Consider the following 543-residue polypeptide: Methionine--tRNA ligase (543 aa).

The short motif at 13 to 23 (PYANGPLHVGH) is the 'HIGH' region element. 4 residues coordinate Zn(2+): cysteine 145, cysteine 148, cysteine 158, and cysteine 161. Positions 334 to 338 (QFSKS) match the 'KMSKS' region motif. Position 337 (lysine 337) interacts with ATP.

Belongs to the class-I aminoacyl-tRNA synthetase family. MetG type 1 subfamily. Zn(2+) serves as cofactor.

The protein localises to the cytoplasm. It catalyses the reaction tRNA(Met) + L-methionine + ATP = L-methionyl-tRNA(Met) + AMP + diphosphate. Is required not only for elongation of protein synthesis but also for the initiation of all mRNA translation through initiator tRNA(fMet) aminoacylation. The sequence is that of Methionine--tRNA ligase from Thermoplasma volcanium (strain ATCC 51530 / DSM 4299 / JCM 9571 / NBRC 15438 / GSS1).